The primary structure comprises 477 residues: UDP-galactose-lipid carrier transferase (477 aa).

The next 6 helical transmembrane spans lie at 16 to 36 (SLAL…IVLI), 52 to 72 (LDLK…WFWV), 93 to 113 (TILI…WELS), 115 to 135 (WIWI…RACV), 175 to 195 (VIAF…GVPV), and 284 to 304 (FDLV…VILI). Topologically, residues 305-477 (FMVSRDGGAP…GVVLKRDGAY (173 aa)) are cytoplasmic.

Belongs to the bacterial sugar transferase family.

The protein resides in the cell membrane. It functions in the pathway glycan metabolism; exopolysaccharide biosynthesis. Involved in the biosynthesis of amylovoran which functions as a virulence factor. May act as a sugar transferase and may be involved in the export of the repeating unit by flipping the lipid carrier to the periplasmic face of the inner membrane. This Erwinia amylovora (Fire blight bacteria) protein is UDP-galactose-lipid carrier transferase (amsG).